Here is a 494-residue protein sequence, read N- to C-terminus: Membrane-bound lytic murein transglycosylase F (494 aa).

A signal peptide spans methionine 1 to alanine 20. Positions glutamate 21–valine 259 are non-LT domain. The interval lysine 260–proline 494 is LT domain. The active site involves glutamate 304. Residues glutamine 473 to leucine 485 are compositionally biased toward polar residues. Residues glutamine 473–proline 494 form a disordered region.

In the N-terminal section; belongs to the bacterial solute-binding protein 3 family. This sequence in the C-terminal section; belongs to the transglycosylase Slt family.

The protein localises to the cell outer membrane. The catalysed reaction is Exolytic cleavage of the (1-&gt;4)-beta-glycosidic linkage between N-acetylmuramic acid (MurNAc) and N-acetylglucosamine (GlcNAc) residues in peptidoglycan, from either the reducing or the non-reducing ends of the peptidoglycan chains, with concomitant formation of a 1,6-anhydrobond in the MurNAc residue.. Functionally, murein-degrading enzyme that degrades murein glycan strands and insoluble, high-molecular weight murein sacculi, with the concomitant formation of a 1,6-anhydromuramoyl product. Lytic transglycosylases (LTs) play an integral role in the metabolism of the peptidoglycan (PG) sacculus. Their lytic action creates space within the PG sacculus to allow for its expansion as well as for the insertion of various structures such as secretion systems and flagella. The chain is Membrane-bound lytic murein transglycosylase F from Shewanella denitrificans (strain OS217 / ATCC BAA-1090 / DSM 15013).